Consider the following 78-residue polypeptide: MGSGLPLVLLLTLLGSSHGTGPGMTLQLKLKESFLTNSSYESSFLELLEKLCLLLHLPSGTSVTLHHARSQHHVVCNT.

Positions Met-1 to Gly-19 are cleaved as a signal peptide. Asn-37 is a glycosylation site (N-linked (GlcNAc...) asparagine).

In terms of processing, N-glycosylated. In terms of tissue distribution, predominantly expressed in lung, where it is detected in type II pneumocytes in the alveolus, and in nonciliated epithelium in bronchioli (at protein level). Also detected at lower levels in cervix, esophagus, stomach, testis and kidney.

The protein resides in the secreted. The protein localises to the cytoplasmic vesicle. It localises to the secretory vesicle. Its subcellular location is the golgi apparatus. Putative surfactant protein. In Homo sapiens (Human), this protein is Surfactant-associated protein 2 (SFTA2).